The following is a 501-amino-acid chain: Aldehyde dehydrogenase 1A1 (501 aa).

Residue S2 is modified to N-acetylserine. K91 and K128 each carry N6-acetyllysine. NAD(+)-binding positions include 167–170 (IPWN), 193–196 (KPAE), 226–227 (GP), and 246–247 (GS). K252 is subject to N6-acetyllysine. Residue E269 is the Proton acceptor of the active site. NAD(+) is bound at residue 269–271 (ELG). C303 functions as the Nucleophile in the catalytic mechanism. The mediates interaction with PRMT3 stretch occupies residues 336 to 501 (LTPGATQGPQ…VTVKISQKNS (166 aa)). At T337 the chain carries Phosphothreonine. 349–353 (EQYDK) lines the NAD(+) pocket. N6-acetyllysine is present on residues K353 and K367. 400–402 (EIF) is an NAD(+) binding site. Position 410 is an N6-acetyllysine (K410). S413 is modified (phosphoserine). N6-acetyllysine occurs at positions 419 and 495.

The protein belongs to the aldehyde dehydrogenase family. Homotetramer. Interacts with PRMT3; the interaction is direct, inhibits ALDH1A1 aldehyde dehydrogenase activity and is independent of the methyltransferase activity of PRMT3. The N-terminus is blocked most probably by acetylation.

It is found in the cytoplasm. The protein localises to the cytosol. It localises to the cell projection. The protein resides in the axon. It carries out the reaction an aldehyde + NAD(+) + H2O = a carboxylate + NADH + 2 H(+). The catalysed reaction is all-trans-retinal + NAD(+) + H2O = all-trans-retinoate + NADH + 2 H(+). It catalyses the reaction 9-cis-retinal + NAD(+) + H2O = 9-cis-retinoate + NADH + 2 H(+). The enzyme catalyses 11-cis-retinal + NAD(+) + H2O = 11-cis-retinoate + NADH + 2 H(+). It carries out the reaction 13-cis-retinal + NAD(+) + H2O = 13-cis-retinoate + NADH + 2 H(+). The catalysed reaction is 3-deoxyglucosone + NAD(+) + H2O = 2-dehydro-3-deoxy-D-gluconate + NADH + 2 H(+). It catalyses the reaction (E)-4-hydroxynon-2-enal + NAD(+) + H2O = (E)-4-hydroxynon-2-enoate + NADH + 2 H(+). The enzyme catalyses malonaldehyde + NAD(+) + H2O = 3-oxopropanoate + NADH + 2 H(+). It carries out the reaction hexanal + NAD(+) + H2O = hexanoate + NADH + 2 H(+). The catalysed reaction is propanal + NAD(+) + H2O = propanoate + NADH + 2 H(+). It catalyses the reaction acetaldehyde + NAD(+) + H2O = acetate + NADH + 2 H(+). The enzyme catalyses benzaldehyde + NAD(+) + H2O = benzoate + NADH + 2 H(+). It carries out the reaction 4-aminobutanal + NAD(+) + H2O = 4-aminobutanoate + NADH + 2 H(+). Its pathway is cofactor metabolism; retinol metabolism. Functionally, cytosolic dehydrogenase that catalyzes the irreversible oxidation of a wide range of aldehydes to their corresponding carboxylic acid. Functions downstream of retinol dehydrogenases and catalyzes the oxidation of retinaldehyde into retinoic acid, the second step in the oxidation of retinol/vitamin A into retinoic acid. This pathway is crucial to control the levels of retinol and retinoic acid, two important molecules which excess can be teratogenic and cytotoxic. Also oxidizes aldehydes resulting from lipid peroxidation like (E)-4-hydroxynon-2-enal/HNE, malonaldehyde and hexanal that form protein adducts and are highly cytotoxic. By participating for instance to the clearance of (E)-4-hydroxynon-2-enal/HNE in the lens epithelium prevents the formation of HNE-protein adducts and lens opacification. Also functions downstream of fructosamine-3-kinase in the fructosamine degradation pathway by catalyzing the oxidation of 3-deoxyglucosone, the carbohydrate product of fructosamine 3-phosphate decomposition, which is itself a potent glycating agent that may react with lysine and arginine side-chains of proteins. Also has an aminobutyraldehyde dehydrogenase activity and is probably part of an alternative pathway for the biosynthesis of GABA/4-aminobutanoate in midbrain, thereby playing a role in GABAergic synaptic transmission. This Macaca fascicularis (Crab-eating macaque) protein is Aldehyde dehydrogenase 1A1.